We begin with the raw amino-acid sequence, 289 residues long: 4-diphosphocytidyl-2-C-methyl-D-erythritol kinase (289 aa).

Residue Lys10 is part of the active site. Position 94-104 (94-104 (PVAAGLAGGSS)) interacts with ATP. Residue Asp136 is part of the active site.

Belongs to the GHMP kinase family. IspE subfamily.

The catalysed reaction is 4-CDP-2-C-methyl-D-erythritol + ATP = 4-CDP-2-C-methyl-D-erythritol 2-phosphate + ADP + H(+). The protein operates within isoprenoid biosynthesis; isopentenyl diphosphate biosynthesis via DXP pathway; isopentenyl diphosphate from 1-deoxy-D-xylulose 5-phosphate: step 3/6. In terms of biological role, catalyzes the phosphorylation of the position 2 hydroxy group of 4-diphosphocytidyl-2C-methyl-D-erythritol. This chain is 4-diphosphocytidyl-2-C-methyl-D-erythritol kinase, found in Bacillus cereus (strain G9842).